The chain runs to 1037 residues: Glycine dehydrogenase (decarboxylating) A, mitochondrial (1037 aa).

A mitochondrion-targeting transit peptide spans 1–66; it reads MERARRLANK…LNGFGSQVRT (66 aa). Lys773 bears the N6-(pyridoxal phosphate)lysine mark.

Belongs to the GcvP family. Homodimer. The glycine cleavage system is composed of four proteins: P, T, L and H. Pyridoxal 5'-phosphate serves as cofactor. Expressed in leaves, stems and roots.

Its subcellular location is the mitochondrion. It carries out the reaction N(6)-[(R)-lipoyl]-L-lysyl-[glycine-cleavage complex H protein] + glycine + H(+) = N(6)-[(R)-S(8)-aminomethyldihydrolipoyl]-L-lysyl-[glycine-cleavage complex H protein] + CO2. In terms of biological role, the glycine cleavage system catalyzes the degradation of glycine. The P protein binds the alpha-amino group of glycine through its pyridoxal phosphate cofactor; CO(2) is released and the remaining methylamine moiety is then transferred to the lipoamide cofactor of the H protein. The sequence is that of Glycine dehydrogenase (decarboxylating) A, mitochondrial (GDCSPA) from Flaveria pringlei.